The primary structure comprises 125 residues: Holo-[acyl-carrier-protein] synthase (125 aa).

Positions 8 and 57 each coordinate Mg(2+).

Belongs to the P-Pant transferase superfamily. AcpS family. It depends on Mg(2+) as a cofactor.

It localises to the cytoplasm. The catalysed reaction is apo-[ACP] + CoA = holo-[ACP] + adenosine 3',5'-bisphosphate + H(+). Functionally, transfers the 4'-phosphopantetheine moiety from coenzyme A to a Ser of acyl-carrier-protein. This is Holo-[acyl-carrier-protein] synthase from Solibacter usitatus (strain Ellin6076).